We begin with the raw amino-acid sequence, 157 residues long: Protein Smg homolog (157 aa).

The protein belongs to the Smg family.

This is Protein Smg homolog from Shewanella piezotolerans (strain WP3 / JCM 13877).